Consider the following 461-residue polypeptide: ATP-dependent protease ATPase subunit HslU (461 aa).

Residues isoleucine 18, glycine 60–glutamate 65, aspartate 274, glutamate 339, and arginine 411 contribute to the ATP site.

The protein belongs to the ClpX chaperone family. HslU subfamily. In terms of assembly, a double ring-shaped homohexamer of HslV is capped on each side by a ring-shaped HslU homohexamer. The assembly of the HslU/HslV complex is dependent on binding of ATP.

The protein localises to the cytoplasm. Functionally, ATPase subunit of a proteasome-like degradation complex; this subunit has chaperone activity. The binding of ATP and its subsequent hydrolysis by HslU are essential for unfolding of protein substrates subsequently hydrolyzed by HslV. HslU recognizes the N-terminal part of its protein substrates and unfolds these before they are guided to HslV for hydrolysis. This chain is ATP-dependent protease ATPase subunit HslU, found in Carboxydothermus hydrogenoformans (strain ATCC BAA-161 / DSM 6008 / Z-2901).